The sequence spans 138 residues: Large ribosomal subunit protein uL14 (138 aa).

It belongs to the universal ribosomal protein uL14 family. Part of the 50S ribosomal subunit. Forms a cluster with proteins L3 and L24e, part of which may contact the 16S rRNA in 2 intersubunit bridges.

Its function is as follows. Binds to 23S rRNA. Forms part of two intersubunit bridges in the 70S ribosome. The protein is Large ribosomal subunit protein uL14 of Hyperthermus butylicus (strain DSM 5456 / JCM 9403 / PLM1-5).